The following is a 799-amino-acid chain: Cadherin-8 (799 aa).

A signal peptide spans Met-1–Met-29. Positions Ala-30–Arg-61 are excised as a propeptide. Cadherin domains are found at residues Gly-62–Phe-167, Leu-168–Phe-276, Ala-277–Phe-391, Ser-392–Pro-494, and Glu-495–Pro-616. Residues Gly-62–Met-621 lie on the Extracellular side of the membrane. A glycan (N-linked (GlcNAc...) asparagine) is linked at Asn-188. N-linked (GlcNAc...) asparagine glycans are attached at residues Asn-463, Asn-473, and Asn-544. The helical transmembrane segment at Gly-622–Val-642 threads the bilayer. Residues Thr-643–Thr-799 are Cytoplasmic-facing. The residue at position 795 (Ser-795) is a Phosphoserine.

It is found in the cell membrane. In terms of biological role, cadherins are calcium-dependent cell adhesion proteins. They preferentially interact with themselves in a homophilic manner in connecting cells; cadherins may thus contribute to the sorting of heterogeneous cell types. This is Cadherin-8 (Cdh8) from Rattus norvegicus (Rat).